Consider the following 228-residue polypeptide: uncharacterized protein (228 aa).

This is an uncharacterized protein from Methanocaldococcus jannaschii (strain ATCC 43067 / DSM 2661 / JAL-1 / JCM 10045 / NBRC 100440) (Methanococcus jannaschii).